The following is a 174-amino-acid chain: Gamma-crystallin D (174 aa).

Beta/gamma crystallin 'Greek key' domains are found at residues 2–40 (GKIT…RVDS) and 41–83 (GCWM…RIIP). A connecting peptide region spans residues 84-87 (YSGS). 2 consecutive Beta/gamma crystallin 'Greek key' domains span residues 88-128 (HKMR…NVLD) and 129-171 (GCWI…RRVI).

Belongs to the beta/gamma-crystallin family. As to quaternary structure, monomer.

In terms of biological role, crystallins are the dominant structural components of the vertebrate eye lens. The polypeptide is Gamma-crystallin D (CRYGD) (Macropus fuliginosus (Western gray kangaroo)).